We begin with the raw amino-acid sequence, 927 residues long: MGDMQDHEKVLEIPDRDSEEELEHVIEQIAYRDLDIPVTEMQESEALPTEQTATDYIPTSTSTSHPSSSQVYVELQELMMDQRNQELQWVEAAHWIGLEENLREDGVWGRPHLSYLTFWSLLELQKVFSKGTFLLDLAETSLAGVANKLLDSFIYEDQIRPQDRDELLRALLLKRSHAEDLKDLEGVKPAVLTRSGAPSEPLLPHQPSLETKLYCAQAEGGSEEPSPSGILKIPPNSETTLVLVGRASFLVKPVLGFVRLKEAVPLEDLVLPEPVSFLLVLLGPEAPHIDYTQLGRAAATLMTERVFRVTASLAQSRGELLSSLDSFLDCSLVLPPTEAPSEKALLNLVPVQKELLRKRYLPRPAKPDPNLYEALDGGKEGPGDEDDPLRRTGRIFGGLIRDIRRRYPYYLSDITDALSPQVLAAVIFIYFAALSPAVTFGGLLGEKTRNLMGVSELLISTAVQGILFALLGAQPLLVLGFSGPLLVFEEAFYSFCESNNLEYIVGRAWIGFWLILLVVLVVAFEGSFLVQYISRYTQEIFSFLISLIFIYETFSKLIKIFQDYPLQESYAPVVMKPKPQGPVPNTALLSLVLMVGTFLLAMMLRKFKNSTYFPGKLRRVIGDFGVPISILIMVLVDTFIKNTYTQKLSVPDGLKVSNSSARGWVIHPLGLYNHFPKWMMFASVLPALLVFILIFLESQITTLIVSKPERKMIKGSGFHLDLLLVVGMGGVAALFGMPWLSATTVRSVTHANALTVMGKASGPGAAAQIQEVKEQRISGLLVSVLVGLSILMEPILSRIPLAVLFGIFLYMGITSLSGIQLFDRILLLFKPPKYHPDVPFVKRVKTWRMHLFTGIQIICLAVLWVVKSTPASLALPFVLILTVPLRRLLLPLIFRELELQCLDGDDAKVTFDEAEGLDEYDEVPMPV.

Residue Met-1 is modified to N-acetylmethionine. Residues 1-420 lie on the Cytoplasmic side of the membrane; it reads MGDMQDHEKV…LSDITDALSP (420 aa). Phosphoserine is present on Ser-18. A phosphotyrosine mark is found at Tyr-31 and Tyr-56. Residues 69 to 303 are globular; it reads SQVYVELQEL…LGRAAATLMT (235 aa). Residues 190–199 are interaction with ANK1; the sequence is AVLTRSGAPS. A phosphoserine mark is found at Ser-199 and Ser-222. The dimerization arm stretch occupies residues 317-370; sequence RGELLSSLDSFLDCSLVLPPTEAPSEKALLNLVPVQKELLRKRYLPRPAKPDPN. A disordered region spans residues 367–390; the sequence is PDPNLYEALDGGKEGPGDEDDPLR. Tyr-372 carries the post-translational modification Phosphotyrosine. The chain crosses the membrane as a helical span at residues 421 to 444; it reads QVLAAVIFIYFAALSPAVTFGGLL. Residues 445–452 are Extracellular-facing; sequence GEKTRNLM. A helical membrane pass occupies residues 453–473; that stretch reads GVSELLISTAVQGILFALLGA. The Cytoplasmic portion of the chain corresponds to 474–476; the sequence is QPL. A discontinuously helical transmembrane segment spans residues 477–493; sequence LVLGFSGPLLVFEEAFY. Residues 494–502 lie on the Extracellular side of the membrane; the sequence is SFCESNNLE. Residues 503-523 traverse the membrane as a helical segment; sequence YIVGRAWIGFWLILLVVLVVA. At 524-535 the chain is on the cytoplasmic side; that stretch reads FEGSFLVQYISR. A helical transmembrane segment spans residues 536–558; sequence YTQEIFSFLISLIFIYETFSKLI. The Extracellular portion of the chain corresponds to 559-586; it reads KIFQDYPLQESYAPVVMKPKPQGPVPNT. The helical transmembrane segment at 587–607 threads the bilayer; the sequence is ALLSLVLMVGTFLLAMMLRKF. Over 608–618 the chain is Cytoplasmic; sequence KNSTYFPGKLR. A helical membrane pass occupies residues 619–639; it reads RVIGDFGVPISILIMVLVDTF. At 640-679 the chain is on the extracellular side; the sequence is IKNTYTQKLSVPDGLKVSNSSARGWVIHPLGLYNHFPKWM. N-linked (GlcNAc...) asparagine glycosylation occurs at Asn-658. The helical transmembrane segment at 680–700 threads the bilayer; the sequence is MFASVLPALLVFILIFLESQI. The Cytoplasmic portion of the chain corresponds to 701–716; that stretch reads TTLIVSKPERKMIKGS. Residues 717–735 traverse the membrane as a helical segment; the sequence is GFHLDLLLVVGMGGVAALF. A discontinuously helical transmembrane segment spans residues 736–753; that stretch reads GMPWLSATTVRSVTHANA. The Cytoplasmic segment spans residues 754 to 776; sequence LTVMGKASGPGAAAQIQEVKEQR. 2 helical membrane-spanning segments follow: residues 777 to 797 and 798 to 816; these read ISGL…PILS and RIPL…ITSL. Residues 817–854 lie on the Cytoplasmic side of the membrane; that stretch reads SGIQLFDRILLLFKPPKYHPDVPFVKRVKTWRMHLFTG. The discontinuously helical intramembrane region spans 855-885; sequence IQIICLAVLWVVKSTPASLALPFVLILTVPL. Cys-859 carries the S-palmitoyl cysteine lipid modification. Topologically, residues 886-927 are cytoplasmic; sequence RRLLLPLIFRELELQCLDGDDAKVTFDEAEGLDEYDEVPMPV. Tyr-920 bears the Phosphotyrosine mark.

The protein belongs to the anion exchanger (TC 2.A.31) family. As to quaternary structure, a dimer in solution, but in its membrane environment, it exists primarily as a mixture of dimers and tetramers and spans the membrane asymmetrically. Component of the ankyrin-1 complex in the erythrocyte, composed of ANK1, RHCE, RHAG, SLC4A1, EPB42, GYPA, GYPB and AQP1. Interacts with STOM; this interaction positively regulates SLC4A1 activity. Interacts with GYPA; a GYPA monomer is bound at each end of the SLC4A1 dimer forming a heterotetramer. Three SLC4A1 dimers (Band 3-I, Band 3-II and Band 3-III) participates in the ankyrin-1 complex. Interacts (via the cytoplasmic domain) with EPB42; this interaction is mediated by the SLC4A1 Band 3-I dimer. Interacts (via the cytoplasmic domain) directly with ANK1; this interaction is mediated by the SLC4A1 Band 3-II and Band 3-III dimers. Interacts with TMEM139. Kidney.

It is found in the cell membrane. The protein localises to the basolateral cell membrane. It carries out the reaction hydrogencarbonate(in) + chloride(out) = hydrogencarbonate(out) + chloride(in). Functionally, functions both as a transporter that mediates electroneutral anion exchange across the cell membrane and as a structural protein. Component of the ankyrin-1 complex of the erythrocyte membrane; required for normal flexibility and stability of the erythrocyte membrane and for normal erythrocyte shape via the interactions of its cytoplasmic domain with cytoskeletal proteins, glycolytic enzymes, and hemoglobin. Functions as a transporter that mediates the 1:1 exchange of inorganic anions across the erythrocyte membrane. Mediates chloride-bicarbonate exchange in the kidney, and is required for normal acidification of the urine. In Rattus norvegicus (Rat), this protein is Band 3 anion transport protein.